We begin with the raw amino-acid sequence, 191 residues long: Divergent paired-related homeobox (191 aa).

Positions 1 to 15 (MPGSEDLRKGKDQMH) are enriched in basic and acidic residues. The interval 1–20 (MPGSEDLRKGKDQMHSHRKR) is disordered. The segment at residues 16-75 (SHRKRTMFTKKQLEDLNILFNENPYPNPSLQKEMASKIDIHPTVLQVWFKNHRAKLKKAK) is a DNA-binding region (homeobox).

Belongs to the paired homeobox family.

The protein resides in the nucleus. Transcription factor that acts as a repressor. The polypeptide is Divergent paired-related homeobox (Homo sapiens (Human)).